The chain runs to 932 residues: Beta-mannosidase A (932 aa).

The signal sequence occupies residues 1–21 (MRIREQTILALLSPGLPPVTG). Asn-40, Asn-248, Asn-283, Asn-317, and Asn-348 each carry an N-linked (GlcNAc...) asparagine glycan. The Proton donor role is filled by Glu-480. 7 N-linked (GlcNAc...) asparagine glycosylation sites follow: Asn-538, Asn-609, Asn-632, Asn-659, Asn-739, Asn-762, and Asn-791.

Belongs to the glycosyl hydrolase 2 family. Beta-mannosidase A subfamily. In terms of assembly, homodimer.

Its subcellular location is the secreted. The enzyme catalyses Hydrolysis of terminal, non-reducing beta-D-mannose residues in beta-D-mannosides.. The protein operates within glycan metabolism; N-glycan degradation. Its function is as follows. Exoglycosidase that cleaves the single beta-linked mannose residue from the non-reducing end of beta-mannosidic oligosaccharides of various complexity and length. Involved in the degradation of polymeric mannan and galactomannan. The sequence is that of Beta-mannosidase A (mndA) from Aspergillus clavatus (strain ATCC 1007 / CBS 513.65 / DSM 816 / NCTC 3887 / NRRL 1 / QM 1276 / 107).